The following is a 526-amino-acid chain: Peptide chain release factor 3 (526 aa).

In terms of domain architecture, tr-type G spans 9–277 (DKRRTFAIIS…GIVEWAPRPQ (269 aa)). Residues 18 to 25 (SHPDAGKT), 86 to 90 (DTPGH), and 140 to 143 (NKLD) each bind GTP.

The protein belongs to the TRAFAC class translation factor GTPase superfamily. Classic translation factor GTPase family. PrfC subfamily.

The protein localises to the cytoplasm. Functionally, increases the formation of ribosomal termination complexes and stimulates activities of RF-1 and RF-2. It binds guanine nucleotides and has strong preference for UGA stop codons. It may interact directly with the ribosome. The stimulation of RF-1 and RF-2 is significantly reduced by GTP and GDP, but not by GMP. This chain is Peptide chain release factor 3, found in Shewanella loihica (strain ATCC BAA-1088 / PV-4).